Reading from the N-terminus, the 413-residue chain is Multifunctional CCA protein (413 aa).

Positions 8 and 11 each coordinate ATP. Residues Gly8 and Arg11 each contribute to the CTP site. Mg(2+)-binding residues include Asp21 and Asp23. The ATP site is built by Arg91, Arg143, and Arg146. CTP contacts are provided by Arg91, Arg143, and Arg146. An HD domain is found at 232–333; that stretch reads TGVHVMMVVD…VRFFERTDAL (102 aa).

The protein belongs to the tRNA nucleotidyltransferase/poly(A) polymerase family. Bacterial CCA-adding enzyme type 1 subfamily. In terms of assembly, monomer. Can also form homodimers and oligomers. Mg(2+) serves as cofactor. Requires Ni(2+) as cofactor.

The catalysed reaction is a tRNA precursor + 2 CTP + ATP = a tRNA with a 3' CCA end + 3 diphosphate. The enzyme catalyses a tRNA with a 3' CCA end + 2 CTP + ATP = a tRNA with a 3' CCACCA end + 3 diphosphate. Catalyzes the addition and repair of the essential 3'-terminal CCA sequence in tRNAs without using a nucleic acid template. Adds these three nucleotides in the order of C, C, and A to the tRNA nucleotide-73, using CTP and ATP as substrates and producing inorganic pyrophosphate. tRNA 3'-terminal CCA addition is required both for tRNA processing and repair. Also involved in tRNA surveillance by mediating tandem CCA addition to generate a CCACCA at the 3' terminus of unstable tRNAs. While stable tRNAs receive only 3'-terminal CCA, unstable tRNAs are marked with CCACCA and rapidly degraded. This chain is Multifunctional CCA protein, found in Burkholderia multivorans (strain ATCC 17616 / 249).